Consider the following 151-residue polypeptide: Small ribosomal subunit protein eS6 (151 aa).

Belongs to the eukaryotic ribosomal protein eS6 family.

In Pyrobaculum calidifontis (strain DSM 21063 / JCM 11548 / VA1), this protein is Small ribosomal subunit protein eS6.